Consider the following 235-residue polypeptide: Phosphoribosylformylglycinamidine synthase subunit PurQ (235 aa).

In terms of domain architecture, Glutamine amidotransferase type-1 spans 3–234; that stretch reads FGVLVFPGSN…LNSLMAQGVT (232 aa). Catalysis depends on C86, which acts as the Nucleophile. Residues H203 and E205 contribute to the active site.

As to quaternary structure, part of the FGAM synthase complex composed of 1 PurL, 1 PurQ and 2 PurS subunits.

The protein localises to the cytoplasm. It catalyses the reaction N(2)-formyl-N(1)-(5-phospho-beta-D-ribosyl)glycinamide + L-glutamine + ATP + H2O = 2-formamido-N(1)-(5-O-phospho-beta-D-ribosyl)acetamidine + L-glutamate + ADP + phosphate + H(+). It carries out the reaction L-glutamine + H2O = L-glutamate + NH4(+). It functions in the pathway purine metabolism; IMP biosynthesis via de novo pathway; 5-amino-1-(5-phospho-D-ribosyl)imidazole from N(2)-formyl-N(1)-(5-phospho-D-ribosyl)glycinamide: step 1/2. Its function is as follows. Part of the phosphoribosylformylglycinamidine synthase complex involved in the purines biosynthetic pathway. Catalyzes the ATP-dependent conversion of formylglycinamide ribonucleotide (FGAR) and glutamine to yield formylglycinamidine ribonucleotide (FGAM) and glutamate. The FGAM synthase complex is composed of three subunits. PurQ produces an ammonia molecule by converting glutamine to glutamate. PurL transfers the ammonia molecule to FGAR to form FGAM in an ATP-dependent manner. PurS interacts with PurQ and PurL and is thought to assist in the transfer of the ammonia molecule from PurQ to PurL. The protein is Phosphoribosylformylglycinamidine synthase subunit PurQ of Acaryochloris marina (strain MBIC 11017).